The following is a 292-amino-acid chain: uncharacterized protein (292 aa).

Residues leucine 13–tyrosine 35 form a helical membrane-spanning segment.

It belongs to the serine esterase family.

It is found in the membrane. This is an uncharacterized protein from Salmonella typhi.